Consider the following 557-residue polypeptide: Potassium-transporting ATPase potassium-binding subunit (557 aa).

A run of 10 helical transmembrane segments spans residues 1-21 (MEIL…IPIG), 62-82 (QYIF…YIIL), 132-152 (IVIT…ALAF), 176-196 (ILLP…VPQT), 253-273 (VQII…GHMI), 279-299 (AVAI…ICFS), 371-391 (IFGG…LTVF), 415-435 (LVAF…ALAL), 482-502 (VSAG…LLAV), and 528-548 (VTLI…AVAL).

This sequence belongs to the KdpA family. As to quaternary structure, the system is composed of three essential subunits: KdpA, KdpB and KdpC.

Its subcellular location is the cell membrane. Functionally, part of the high-affinity ATP-driven potassium transport (or Kdp) system, which catalyzes the hydrolysis of ATP coupled with the electrogenic transport of potassium into the cytoplasm. This subunit binds the extracellular potassium ions and delivers the ions to the membrane domain of KdpB through an intramembrane tunnel. The chain is Potassium-transporting ATPase potassium-binding subunit from Clostridium acetobutylicum (strain ATCC 824 / DSM 792 / JCM 1419 / IAM 19013 / LMG 5710 / NBRC 13948 / NRRL B-527 / VKM B-1787 / 2291 / W).